The chain runs to 292 residues: MSMPATSTKTTKLATSLIDEYALLGWRAMLTEVNLSPKPGLVDRINCGAHKDMALEDFHRSALAIQGWLPRFIEFGACSAEMAPEAVLNGLRPIGMACEGDMFRATAGVNTHKGSIFSLGLLCAAIGRLLQLNQPVTPTTVCSTAASFCRGLTDRELRTNNSQRTAGQRLYQQLGLTGARGEAEAGYPLVINHALPHYLTLLDQGLDPELALLDTLLLLMATNGDTNVASRGGEGGLRWLQREAQTLLNNGGIRTPADLDYLRQFDRECIERNLSPGGSADLLILTWFLAQI.

Belongs to the CitG/MdcB family.

The catalysed reaction is 3'-dephospho-CoA + ATP = 2'-(5''-triphospho-alpha-D-ribosyl)-3'-dephospho-CoA + adenine. In terms of biological role, catalyzes the formation of 2-(5''-triphosphoribosyl)-3'-dephosphocoenzyme-A, the precursor of the prosthetic group of the holo-acyl carrier protein (gamma chain) of citrate lyase, from ATP and dephospho-CoA. This chain is 2-(5''-triphosphoribosyl)-3'-dephosphocoenzyme-A synthase, found in Escherichia coli O7:K1 (strain IAI39 / ExPEC).